We begin with the raw amino-acid sequence, 518 residues long: Ell-associated factor Eaf (518 aa).

Composition is skewed to polar residues over residues K119–P128 and E163–N182. Disordered regions lie at residues K119–H216 and A241–D518. Phosphoserine is present on S192. Polar residues-rich tracts occupy residues A253–G265 and M274–G284. Residues Q289–Q342 are compositionally biased toward low complexity. A compositionally biased stretch (polar residues) spans R343–M355. The span at A368–A377 shows a compositional bias: low complexity. Residues E397–E412 show a composition bias toward acidic residues. Composition is skewed to low complexity over residues H418–S428, Q463–Q476, and N500–D518.

It belongs to the EAF family.

The protein resides in the nucleus. Functionally, promotes transcriptional elongation by Su(Tpl)/ELL. Essential for development. In Drosophila mojavensis (Fruit fly), this protein is Ell-associated factor Eaf.